A 334-amino-acid chain; its full sequence is HTH-type transcriptional repressor PurR (334 aa).

Residues 2–56 (ATIKDVAKMAGVSTTTVSHVINKTRFVAAETEKLVLQAIQELNYSPSAVARSLKV) form the HTH lacI-type domain. The segment at residues 4–23 (IKDVAKMAGVSTTTVSHVIN) is a DNA-binding region (H-T-H motif). The DNA-binding element occupies 48 to 56 (SAVARSLKV). Positions 73, 189, 191, 220, and 274 each coordinate hypoxanthine.

As to quaternary structure, homodimer.

Its pathway is purine metabolism; purine nucleotide biosynthesis [regulation]. Functionally, is the main repressor of the genes involved in the de novo synthesis of purine nucleotides, regulating purB, purC, purEK, purF, purHD, purL, purMN and guaBA expression. PurR is allosterically activated to bind its cognate DNA by binding the purine corepressors, hypoxanthine or guanine, thereby effecting transcription repression. This chain is HTH-type transcriptional repressor PurR, found in Pasteurella multocida (strain Pm70).